The primary structure comprises 873 residues: DNA mismatch repair protein MutS (873 aa).

An ATP-binding site is contributed by 625–632; it reads GPNMGGKS.

The protein belongs to the DNA mismatch repair MutS family.

In terms of biological role, this protein is involved in the repair of mismatches in DNA. It is possible that it carries out the mismatch recognition step. This protein has a weak ATPase activity. This is DNA mismatch repair protein MutS from Xanthomonas oryzae pv. oryzae (strain KACC10331 / KXO85).